The following is a 224-amino-acid chain: ATP phosphoribosyltransferase (224 aa).

Belongs to the ATP phosphoribosyltransferase family. Short subfamily. As to quaternary structure, heteromultimer composed of HisG and HisZ subunits.

Its subcellular location is the cytoplasm. The catalysed reaction is 1-(5-phospho-beta-D-ribosyl)-ATP + diphosphate = 5-phospho-alpha-D-ribose 1-diphosphate + ATP. It participates in amino-acid biosynthesis; L-histidine biosynthesis; L-histidine from 5-phospho-alpha-D-ribose 1-diphosphate: step 1/9. Functionally, catalyzes the condensation of ATP and 5-phosphoribose 1-diphosphate to form N'-(5'-phosphoribosyl)-ATP (PR-ATP). Has a crucial role in the pathway because the rate of histidine biosynthesis seems to be controlled primarily by regulation of HisG enzymatic activity. The chain is ATP phosphoribosyltransferase from Cupriavidus metallidurans (strain ATCC 43123 / DSM 2839 / NBRC 102507 / CH34) (Ralstonia metallidurans).